Consider the following 288-residue polypeptide: Sulfur carrier protein FdhD (288 aa).

Cys-122 serves as the catalytic Cysteine persulfide intermediate. Phe-268 to Arg-273 serves as a coordination point for Mo-bis(molybdopterin guanine dinucleotide).

It belongs to the FdhD family.

It localises to the cytoplasm. In terms of biological role, required for formate dehydrogenase (FDH) activity. Acts as a sulfur carrier protein that transfers sulfur from IscS to the molybdenum cofactor prior to its insertion into FDH. The sequence is that of Sulfur carrier protein FdhD from Anaeromyxobacter dehalogenans (strain 2CP-1 / ATCC BAA-258).